The following is a 192-amino-acid chain: Protein FAM210B, mitochondrial (192 aa).

A mitochondrion-targeting transit peptide spans 1–58 (MAGLLALLGPAGRVGARVRPRATWLLGATAPCAPPPLALALLPPRLDARLLRTARGDC). The disordered stretch occupies residues 57 to 80 (DCRGHQDPSQATGTTGSSVSCTEE). The span at 63-77 (DPSQATGTTGSSVSC) shows a compositional bias: polar residues. Positions 80-191 (EKKQSKSQQL…VGFFKPPAAK (112 aa)) constitute a DUF1279 domain. The next 2 helical transmembrane spans lie at 99–119 (VGVSLHIGISLISLGIFYMVV) and 150–170 (FVVAYAIHKLFAPVRISITLV).

It belongs to the FAM210 family. In terms of tissue distribution, expressed in late erythroblast differentiation stages. Underexpressed in ovarian cancer epithelia cells compared with normal human ovarian surface epithelia.

Its subcellular location is the mitochondrion. The protein resides in the mitochondrion outer membrane. Plays a role in erythroid differentiation. Involved in cell proliferation and tumor cell growth suppression. Involved in the metabolic reprogramming of cancer cells in a PDK4-dependent manner. This Homo sapiens (Human) protein is Protein FAM210B, mitochondrial.